The following is a 338-amino-acid chain: Ketol-acid reductoisomerase (NADP(+)) (338 aa).

The region spanning 1–181 is the KARI N-terminal Rossmann domain; sequence MQIFYDKDCD…GGGRTGIIET (181 aa). NADP(+) contacts are provided by residues 24 to 27, R47, S50, S52, and 82 to 85; these read YGSQ and DEFQ. H107 is an active-site residue. An NADP(+)-binding site is contributed by G133. Residues 182–327 enclose the KARI C-terminal knotted domain; it reads SFREETETDL…SKLRAMMPWI (146 aa). Mg(2+) is bound by residues D190, E194, E226, and E230. A substrate-binding site is contributed by S251.

This sequence belongs to the ketol-acid reductoisomerase family. Mg(2+) is required as a cofactor.

It catalyses the reaction (2R)-2,3-dihydroxy-3-methylbutanoate + NADP(+) = (2S)-2-acetolactate + NADPH + H(+). It carries out the reaction (2R,3R)-2,3-dihydroxy-3-methylpentanoate + NADP(+) = (S)-2-ethyl-2-hydroxy-3-oxobutanoate + NADPH + H(+). It functions in the pathway amino-acid biosynthesis; L-isoleucine biosynthesis; L-isoleucine from 2-oxobutanoate: step 2/4. Its pathway is amino-acid biosynthesis; L-valine biosynthesis; L-valine from pyruvate: step 2/4. Its function is as follows. Involved in the biosynthesis of branched-chain amino acids (BCAA). Catalyzes an alkyl-migration followed by a ketol-acid reduction of (S)-2-acetolactate (S2AL) to yield (R)-2,3-dihydroxy-isovalerate. In the isomerase reaction, S2AL is rearranged via a Mg-dependent methyl migration to produce 3-hydroxy-3-methyl-2-ketobutyrate (HMKB). In the reductase reaction, this 2-ketoacid undergoes a metal-dependent reduction by NADPH to yield (R)-2,3-dihydroxy-isovalerate. The sequence is that of Ketol-acid reductoisomerase (NADP(+)) from Acinetobacter baylyi (strain ATCC 33305 / BD413 / ADP1).